The primary structure comprises 535 residues: Cytochrome P450 4c3 (535 aa).

Heme is bound by residues E342 and C481.

The protein belongs to the cytochrome P450 family. It depends on heme as a cofactor.

It is found in the endoplasmic reticulum membrane. Its subcellular location is the microsome membrane. In terms of biological role, may be involved in the metabolism of insect hormones and in the breakdown of synthetic insecticides. The chain is Cytochrome P450 4c3 (Cyp4c3) from Drosophila melanogaster (Fruit fly).